A 72-amino-acid polypeptide reads, in one-letter code: Caerin-regulated peptide (72 aa).

Residues M1 to C22 form the signal peptide. Positions D23 to E43 are excised as a propeptide. Residues E24–G46 form a disordered region. Residues E30 to S41 show a composition bias toward acidic residues.

Expressed by the skin glands.

The protein resides in the secreted. Functionally, has antibacterial activity against Gram-positive bacterium M.luteus NCT C2665 and against Gram-negative bacterium E.coli K12D31. This Agalychnis callidryas (Red-eyed tree frog) protein is Caerin-regulated peptide.